A 262-amino-acid polypeptide reads, in one-letter code: Apolipoprotein A-I-1 (262 aa).

Residues 1 to 18 (MKFLALALTILLAAGTQA) form the signal peptide. The segment at 32–63 (VKAALSMYIAQVKLTAQRSIDLLDDTEYKEYK) is 3 X approximate tandem repeats. 2 tandem repeats follow at residues 64–85 (MQLT…QSLA) and 87–107 (YSEA…AEVM). The tract at residues 64–262 (MQLTQSLDNL…YETISQAMKA (199 aa)) is 10 X approximate tandem repeats. The stretch at 108–118 (KDVEELRSQLE) is one 3; half-length repeat. 5 repeat units span residues 119-140 (PKRA…KKLE), 141-162 (PLIK…AKME), 163-184 (PIVE…TKLM), 185-206 (PIVE…TLAA), and 207-228 (PYAE…EKVS). Residues 229 to 239 (PLSEDFKGQVG) form a 9; half-length repeat. Repeat unit 10 spans residues 240–262 (PAAEQAKQKLLAFYETISQAMKA).

It belongs to the apolipoprotein A1/A4/E family.

It localises to the secreted. Its function is as follows. Participates in the reverse transport of cholesterol from tissues to the liver for excretion by promoting cholesterol efflux from tissues and by acting as a cofactor for the lecithin cholesterol acyltransferase (LCAT). This Oncorhynchus mykiss (Rainbow trout) protein is Apolipoprotein A-I-1.